We begin with the raw amino-acid sequence, 188 residues long: D-glycero-beta-D-manno-heptose-1,7-bisphosphate 7-phosphatase (188 aa).

Zn(2+)-binding residues include cysteine 92, histidine 94, cysteine 107, and cysteine 109.

This sequence belongs to the GmhB family.

The protein localises to the cytoplasm. It catalyses the reaction D-glycero-beta-D-manno-heptose 1,7-bisphosphate + H2O = D-glycero-beta-D-manno-heptose 1-phosphate + phosphate. It functions in the pathway nucleotide-sugar biosynthesis; ADP-L-glycero-beta-D-manno-heptose biosynthesis; ADP-L-glycero-beta-D-manno-heptose from D-glycero-beta-D-manno-heptose 7-phosphate: step 2/4. Its pathway is bacterial outer membrane biogenesis; LPS core biosynthesis. Its function is as follows. Converts the D-glycero-beta-D-manno-heptose 1,7-bisphosphate intermediate into D-glycero-beta-D-manno-heptose 1-phosphate by removing the phosphate group at the C-7 position. The protein is D-glycero-beta-D-manno-heptose-1,7-bisphosphate 7-phosphatase (gmhB1) of Photorhabdus laumondii subsp. laumondii (strain DSM 15139 / CIP 105565 / TT01) (Photorhabdus luminescens subsp. laumondii).